The following is a 183-amino-acid chain: ER membrane protein complex subunit 4 (183 aa).

Thr-2 is subject to N-acetylthreonine. Over 2–66 (TAQGGLVANR…VQETDRILVE (65 aa)) the chain is Cytoplasmic. Positions 20-39 (ELSGPGGGSRGRSDRGSGQG) are disordered. Residue Ser-36 is modified to Phosphoserine. A helical membrane pass occupies residues 67–87 (KRCWDIALGPLKQIPMNLFIM). Over 88 to 98 (YMAGNTISIFP) the chain is Lumenal. The helical transmembrane segment at 99 to 120 (TMMVCMMAWRPIQALMAISATF) threads the bilayer. At 121-127 (KMLESSS) the chain is on the cytoplasmic side. A helical membrane pass occupies residues 128 to 148 (QKFLQGLVYLIGNLMGLALAV). Over 149-183 (YKCQSMGLLPTHASDWLAFIEPPERMEFSGGGLLL) the chain is Lumenal.

Belongs to the EMC4 family. As to quaternary structure, component of the ER membrane protein complex (EMC). As to expression, isoform 1 is expressed in brain and heart. Isoform 2 is expressed in heart.

It localises to the endoplasmic reticulum membrane. In terms of biological role, part of the endoplasmic reticulum membrane protein complex (EMC) that enables the energy-independent insertion into endoplasmic reticulum membranes of newly synthesized membrane proteins. Preferentially accommodates proteins with transmembrane domains that are weakly hydrophobic or contain destabilizing features such as charged and aromatic residues. Involved in the cotranslational insertion of multi-pass membrane proteins in which stop-transfer membrane-anchor sequences become ER membrane spanning helices. It is also required for the post-translational insertion of tail-anchored/TA proteins in endoplasmic reticulum membranes. By mediating the proper cotranslational insertion of N-terminal transmembrane domains in an N-exo topology, with translocated N-terminus in the lumen of the ER, controls the topology of multi-pass membrane proteins like the G protein-coupled receptors. By regulating the insertion of various proteins in membranes, it is indirectly involved in many cellular processes. This Homo sapiens (Human) protein is ER membrane protein complex subunit 4 (EMC4).